The primary structure comprises 429 residues: C4-dicarboxylate transport protein (429 aa).

Transmembrane regions (helical) follow at residues 9-29 (VLYV…HFYP), 45-65 (LIKM…IAGM), 79-99 (LLYF…ATHI), 149-169 (GEIL…AHLG), 185-205 (VLFG…FGAM), 223-243 (LIGT…GTIA), 308-328 (IYMT…LTWM), and 356-376 (AATL…ILGI).

This sequence belongs to the dicarboxylate/amino acid:cation symporter (DAACS) (TC 2.A.23) family.

The protein localises to the cell inner membrane. Its function is as follows. Responsible for the transport of dicarboxylates such as succinate, fumarate, and malate from the periplasm across the membrane. In Burkholderia ambifaria (strain ATCC BAA-244 / DSM 16087 / CCUG 44356 / LMG 19182 / AMMD) (Burkholderia cepacia (strain AMMD)), this protein is C4-dicarboxylate transport protein.